A 1857-amino-acid polypeptide reads, in one-letter code: Phosphatidylinositol 3-kinase 2 (1857 aa).

Low complexity-rich tracts occupy residues 1 to 32 (MKMSEGIISPLSLSSESSEQQQAAIRKFSNGS) and 42 to 55 (NLSVNSSNSGSNNS). 5 disordered regions span residues 1-61 (MKMS…KSST), 145-313 (TPLN…TNRV), 348-468 (SSSK…NSIR), 481-512 (ISSNGIPSSPGQVSNKDYNNIGNLSNSSGERV), and 530-573 (ESDI…GPNV). Positions 145–155 (TPLNRSRSGSI) are enriched in polar residues. Residues 162–269 (NNLTSSSSSS…NNNNNNNSNS (108 aa)) are compositionally biased toward low complexity. Residues 270–281 (GGSSRMITSKSQ) show a composition bias toward polar residues. 2 stretches are compositionally biased toward low complexity: residues 288 to 311 (TSNTAATTTTTTTTNTSAPTTPTN) and 352 to 464 (LLIP…QPSN). A compositionally biased stretch (low complexity) spans 533 to 560 (ISSSPRSIGSPNSIRASISSQLPPSLSS). Over residues 561–570 (IGGGGGGGSG) the composition is skewed to gly residues. The PI3K-RBD domain maps to 821 to 934 (PNKITIMVLL…NQTVELSLTN (114 aa)). The segment at 996–1078 (KETNKENKDS…SGSGNGSEQP (83 aa)) is disordered. Positions 997–1011 (ETNKENKDSNKENKD) are enriched in basic and acidic residues. The span at 1012-1056 (SSSNNNNNNNNNNNNNNNNNNNNNNNNNNNGNNNGNNSNNNSNSN) shows a compositional bias: low complexity. Residues 1099 to 1271 (VKRLFRVNIA…QPIILLVEFE (173 aa)) enclose the C2 PI3K-type domain. In terms of domain architecture, PIK helical spans 1326–1503 (PVGLKKLDLD…GLLLEGYLRS (178 aa)). In terms of domain architecture, PI3K/PI4K catalytic spans 1568-1845 (IIDKCRYMDS…NISVALNTKT (278 aa)). Residues 1574–1580 (YMDSKKL) are G-loop. Positions 1711 to 1719 (GIGDRHSDN) are catalytic loop. The interval 1730–1756 (HIDFGHFLGNYKKKYGFKRERAPFIFT) is activation loop.

Belongs to the PI3/PI4-kinase family.

It catalyses the reaction a 1,2-diacyl-sn-glycero-3-phospho-(1D-myo-inositol) + ATP = a 1,2-diacyl-sn-glycero-3-phospho-(1D-myo-inositol-3-phosphate) + ADP + H(+). This is Phosphatidylinositol 3-kinase 2 (pikB) from Dictyostelium discoideum (Social amoeba).